A 278-amino-acid chain; its full sequence is Tryptophan 2,3-dioxygenase (278 aa).

Residues 47–51, tyrosine 109, and arginine 113 contribute to the substrate site; that span reads FIVQH. Histidine 236 contributes to the heme binding site. Threonine 250 provides a ligand contact to substrate.

It belongs to the tryptophan 2,3-dioxygenase family. Homotetramer. Requires heme as cofactor.

The enzyme catalyses L-tryptophan + O2 = N-formyl-L-kynurenine. It functions in the pathway amino-acid degradation; L-tryptophan degradation via kynurenine pathway; L-kynurenine from L-tryptophan: step 1/2. Functionally, heme-dependent dioxygenase that catalyzes the oxidative cleavage of the L-tryptophan (L-Trp) pyrrole ring and converts L-tryptophan to N-formyl-L-kynurenine. Catalyzes the oxidative cleavage of the indole moiety. In Ralstonia pickettii (strain 12J), this protein is Tryptophan 2,3-dioxygenase.